The following is a 74-amino-acid chain: MQMPSTQTSKPPQLSQTPVSAAVVVKALKNSVKAAFLTSSPQAPGTLKPRALVRPSPGPVQENHLSEAQFPPKL.

The segment at 39–74 (SSPQAPGTLKPRALVRPSPGPVQENHLSEAQFPPKL) is disordered.

This is an uncharacterized protein from Homo sapiens (Human).